Reading from the N-terminus, the 984-residue chain is Ubiquitin conjugation factor E4 ufd-2 (984 aa).

One can recognise a U-box domain in the interval Asp909–Ser982.

The protein belongs to the ubiquitin conjugation factor E4 family. Forms a complex composed of deubiquitinating enzyme atx-3, E4 ubiquitin-protein ligase ufd-2 and cdc-48.1; within the complex interacts with atx-3 and cdc-48.1 (via DDDLYN motif). Forms a complex composed of cdc-48.1, myosin chaperone unc-45, ubiquitin-protein ligases ufd-2 and chn-1; the complex targets myosin chaperone unc-45 for proteasomal degradation; within the complex interacts with cdc-48.1 (via DDDLYN motif), chn-1 and unc-45. Forms a complex composed of unc-45 and myosin heavy chain B unc-54; the complex targets unfolded unc-54 for proteasomal degradation; within the complex interacts with unc-45 (via TPR domain) and unc-54. Interacts with cdc-48.2 (via DDDLYN motif). As to expression, expressed in the germline (at protein level).

Its subcellular location is the cytoplasm. The protein resides in the nucleus membrane. It is found in the nucleus. The protein localises to the nucleolus. The catalysed reaction is S-ubiquitinyl-[E2 ubiquitin-conjugating enzyme]-L-cysteine + [acceptor protein]-L-lysine = [E2 ubiquitin-conjugating enzyme]-L-cysteine + N(6)-ubiquitinyl-[acceptor protein]-L-lysine.. The protein operates within protein modification; protein ubiquitination. In terms of biological role, acts as an E4 ubiquitin ligase mediating the assembly of polyubiquitin chains on substrates ubiquitinated by another E3 ubiquitin ligase. The elongation of preexisting ubiquitin chains preferentially targets ubiquitin 'Lys-29' and 'Lys-48' residues. Also functions as an E3 ligase in conjunction with specific E1 and E2 ligases. Probably by regulating protein ubiquitination at DNA damage repair sites, coordinates DNA double-strand-break repair and apoptosis in the germline. Required for germline apoptosis in response to DNA damage downstream of cep-1. Involved in the resolution of DNA-repair sites by promoting the release of rad-51 from DNA damage foci. In association with protein-ligase chn-1, acts as an E3/E4 ligase to poly-ubiquitinate lysine residues in the UCS domain of myosin chaperone unc-45. By targeting myosin chaperone unc-45 for proteasomal degradation, regulates myosin assembly in body wall muscles in association with cdc-48.1 and chn-1. However, in a contrasting study, acts as an E3 ligase, independently of chn-1, to poly-ubiquitinate unc-45 without promoting unc-45 proteasomal degradation. Instead, uses unc-45 as an adapter protein to recruit and poly-ubiquitinate unfolded myosin heavy chain B unc-54. This is Ubiquitin conjugation factor E4 ufd-2 from Caenorhabditis elegans.